The following is a 142-amino-acid chain: uncharacterized protein (142 aa).

This is an uncharacterized protein from Homo sapiens (Human).